A 386-amino-acid chain; its full sequence is GTPase Obg (386 aa).

The 159-residue stretch at 1 to 159 (MKFVDEAKIK…RNLLLELLLL (159 aa)) folds into the Obg domain. The OBG-type G domain occupies 160 to 333 (ADVGMLGLPN…LCRDVVEYLE (174 aa)). GTP is bound by residues 166 to 173 (GLPNAGKS), 191 to 195 (FTTLV), 213 to 216 (DIPG), 283 to 286 (NKTD), and 314 to 316 (AAI). Mg(2+) is bound by residues S173 and T193.

This sequence belongs to the TRAFAC class OBG-HflX-like GTPase superfamily. OBG GTPase family. In terms of assembly, monomer. The cofactor is Mg(2+).

The protein resides in the cytoplasm. Functionally, an essential GTPase which binds GTP, GDP and possibly (p)ppGpp with moderate affinity, with high nucleotide exchange rates and a fairly low GTP hydrolysis rate. Plays a role in control of the cell cycle, stress response, ribosome biogenesis and in those bacteria that undergo differentiation, in morphogenesis control. This is GTPase Obg from Psychromonas ingrahamii (strain DSM 17664 / CCUG 51855 / 37).